An 89-amino-acid chain; its full sequence is uncharacterized protein (89 aa).

The next 2 helical transmembrane spans lie at 1-21 (MFLA…ISLI) and 28-48 (GISL…TIAA).

The protein resides in the cell membrane. This is an uncharacterized protein from Methanocaldococcus jannaschii (strain ATCC 43067 / DSM 2661 / JAL-1 / JCM 10045 / NBRC 100440) (Methanococcus jannaschii).